Here is an 802-residue protein sequence, read N- to C-terminus: Acetyl-CoA decarbonylase/synthase complex subunit alpha (802 aa).

6 residues coordinate [4Fe-4S] cluster: cysteine 69, cysteine 72, cysteine 73, cysteine 75, cysteine 80, and cysteine 90. Histidine 113 contacts CO. The [Ni-4Fe-4S] cluster site is built by histidine 246, cysteine 274, and cysteine 319. 2 consecutive 4Fe-4S ferredoxin-type domains span residues 404–432 (EELK…ISEA) and 442–473 (SKFE…VIEK). [4Fe-4S] cluster-binding residues include cysteine 413, cysteine 416, cysteine 419, cysteine 423, cysteine 451, cysteine 454, cysteine 457, and cysteine 461. [Ni-4Fe-4S] cluster is bound by residues cysteine 519, cysteine 548, and cysteine 583.

It belongs to the Ni-containing carbon monoxide dehydrogenase family. Heterotetramer of two alpha and two epsilon subunits. The ACDS complex is made up of alpha, epsilon, beta, gamma and delta subunits with a probable stoichiometry of (alpha(2)epsilon(2))(4)-beta(8)-(gamma(1)delta(1))(8). Requires [4Fe-4S] cluster as cofactor. [Ni-4Fe-4S] cluster serves as cofactor.

The catalysed reaction is CO + 2 oxidized [2Fe-2S]-[ferredoxin] + H2O = 2 reduced [2Fe-2S]-[ferredoxin] + CO2 + 2 H(+). Its pathway is one-carbon metabolism; methanogenesis from acetate. Its function is as follows. Part of the ACDS complex that catalyzes the reversible cleavage of acetyl-CoA, allowing growth on acetate as sole source of carbon and energy. The alpha-epsilon subcomponent functions as a carbon monoxide dehydrogenase. The protein is Acetyl-CoA decarbonylase/synthase complex subunit alpha of Methanococcoides burtonii (strain DSM 6242 / NBRC 107633 / OCM 468 / ACE-M).